A 149-amino-acid chain; its full sequence is Transcriptional regulator MraZ (149 aa).

2 SpoVT-AbrB domains span residues 7 to 54 (KYVN…GISH) and 83 to 126 (AVQL…QPQN).

Belongs to the MraZ family. Forms oligomers.

It localises to the cytoplasm. The protein localises to the nucleoid. The sequence is that of Transcriptional regulator MraZ from Rickettsia peacockii (strain Rustic).